Reading from the N-terminus, the 530-residue chain is 5-aminolevulinate synthase, mitochondrial (530 aa).

The N-terminal 26 residues, 1–26, are a transit peptide targeting the mitochondrion; the sequence is MFRPVLKVRPSFSYPYSIVSSRSVRL. Substrate contacts are provided by Arg-73, Ser-186, and Lys-205. 3 residues coordinate pyridoxal 5'-phosphate: Ser-238, His-266, and Thr-316. Lys-319 is a catalytic residue. Lys-319 carries the N6-(pyridoxal phosphate)lysine modification. Pyridoxal 5'-phosphate contacts are provided by Thr-348 and Thr-349. Thr-434 lines the substrate pocket.

The protein belongs to the class-II pyridoxal-phosphate-dependent aminotransferase family. Homodimer. Requires pyridoxal 5'-phosphate as cofactor.

The protein localises to the mitochondrion matrix. The catalysed reaction is succinyl-CoA + glycine + H(+) = 5-aminolevulinate + CO2 + CoA. The protein operates within porphyrin-containing compound metabolism; protoporphyrin-IX biosynthesis; 5-aminolevulinate from glycine: step 1/1. Its function is as follows. Catalyzes the synthesis of 5-aminolevulinate (ALA) from succinyl-CoA and glycine, the first and rate-limiting step in heme biosynthesis. The polypeptide is 5-aminolevulinate synthase, mitochondrial (HEM1) (Candida glabrata (strain ATCC 2001 / BCRC 20586 / JCM 3761 / NBRC 0622 / NRRL Y-65 / CBS 138) (Yeast)).